The sequence spans 1855 residues: Collagen alpha-1(XXVII) chain (1855 aa).

The first 48 residues, 1–48 (MGLARATAGLGPCCPPAPALLGAGLRWGGFLFAWILVSFSCHLASTQG), serve as a signal peptide directing secretion. The propeptide at 49–618 (APEDVDVLQR…PEPTPFLMLM (570 aa)) is N-terminal propeptide. Residues 81–246 (PSGFIFTQRA…NYCAHLRERC (166 aa)) enclose the Laminin G-like domain. Residues Asn-281 and Asn-349 are each glycosylated (N-linked (GlcNAc...) asparagine). Disordered stretches follow at residues 317 to 428 (DVSK…SATV), 511 to 580 (PPLG…SQLS), 617 to 787 (LMGP…GFPG), and 838 to 1617 (GGVG…HPVQ). Polar residues-rich tracts occupy residues 382-427 (LSVT…SSAT) and 520-532 (MMPSTRDSTSTPA). The segment covering 563–573 (TARDASPRDLT) has biased composition (basic and acidic residues). Collagen-like domains lie at 619–673 (GPPG…GDPG), 682–741 (GAKG…PGPV), 751–810 (GYIG…PGPP), 826–885 (GYPG…PGPM), 886–945 (GKAG…EGPM), 946–1005 (GPPG…VGEK), 1006–1047 (GDRG…PGSR), 1048–1105 (GLPG…GAKG), 1108–1155 (GIPG…PGLP), 1156–1215 (GDSG…KGQE), 1216–1275 (GLKG…PGTP), 1276–1330 (GPKG…GEDG), and 1334–1393 (GAPG…KGSK). Residues 619 to 1612 (GPPGSKGDCG…RGRPGPPGPP (994 aa)) form a triple-helical region region. Residues 630–663 (PGPPGLPGLPGSPGPRGPRGPPGPFGNPGLPGPP) show a composition bias toward pro residues. Residues 708–728 (PGAAGHPGEQGQPGPEGSPGA) show a composition bias toward low complexity. Residues 905-918 (FPGDIGPPGDNGPE) show a composition bias toward low complexity. Positions 1027-1036 (GTPGGVGDPG) are enriched in gly residues. Composition is skewed to low complexity over residues 1083-1095 (RGRPGQPGQQGAA), 1121-1131 (LPGEPGSQGPQ), and 1161-1176 (KGDLGPLGPPGEQGLI). Basic and acidic residues-rich tracts occupy residues 1196 to 1221 (LKGDRGDPGPDGEHGEKGQEGLKGEE), 1320 to 1332 (KGEKGEQGEDGKT), and 1344 to 1354 (PVGDRGDRGEP). 2 stretches are compositionally biased toward low complexity: residues 1369–1378 (RGEPGQQGQP) and 1404–1431 (KAGASGRRGTQGLQGLPGPRGVVGRQGP). Collagen-like domains are found at residues 1433–1492 (GMAG…SGLP), 1493–1552 (GQLG…KGIQ), and 1553–1612 (GPRG…PGPP). The span at 1566 to 1581 (IIGPPGMLGPSGLPGP) shows a compositional bias: low complexity. The span at 1597 to 1614 (RGPPGPRGRPGPPGPPWH) shows a compositional bias: pro residues. The propeptide at 1616-1855 (VQFQQDDLEA…RLEVGPACFL (240 aa)) is C-terminal propeptide. The Fibrillar collagen NC1 domain maps to 1655 to 1855 (GEIFKTLHYL…RLEVGPACFL (201 aa)). Cystine bridges form between Cys-1685–Cys-1717, Cys-1726–Cys-1853, and Cys-1762–Cys-1806. The Ca(2+) site is built by Asp-1703, Asn-1705, Cys-1708, and Asp-1711. Asn-1764 carries an N-linked (GlcNAc...) asparagine glycan.

It belongs to the fibrillar collagen family.

The protein resides in the secreted. It is found in the extracellular space. It localises to the extracellular matrix. Plays a role during the calcification of cartilage and the transition of cartilage to bone. The protein is Collagen alpha-1(XXVII) chain (Col27a1) of Rattus norvegicus (Rat).